Here is a 372-residue protein sequence, read N- to C-terminus: M protein, serotype 2.2 (372 aa).

The signal sequence occupies residues 1–41 (MARQQTKKNYSLRKLKTGTASVAVALTVLGAGFANQTEVRA). C repeat units lie at residues 124 to 158 (AKTTKENEISEASRKGLSRDLEASRTAKKELEAKH), 166 to 200 (KKLTEGNQVSEASRKGLSNDLEASRAAKKELEAKY), and 215 to 249 (QKLEADYQVSETSRKGLSRDLEASREANKKVTSEL). Basic and acidic residues-rich tracts occupy residues 125–169 (KTTK…KKLT), 226–246 (TSRKGLSRDLEASREANKKVT), and 260–274 (EESKKLSEKEKAELQ). Disordered regions lie at residues 125 to 191 (KTTK…ASRA) and 211 to 274 (EAKH…AELQ). D repeat units lie at residues 275–280 (AKLDAQ), 281–286 (GKALKE), 289–294 (AKQTEE), and 296–301 (AKLRAE). Positions 295–304 (LAKLRAEKAA) are enriched in basic and acidic residues. The segment at 295-344 (LAKLRAEKAAGSKTPATKPANKERSGRAAQTATRPSQNKGMRSQLPSTGE) is disordered. Positions 322–341 (AAQTATRPSQNKGMRSQLPS) are enriched in polar residues. The LPXTG sorting signal motif lies at 339–343 (LPSTG). Thr342 is subject to Pentaglycyl murein peptidoglycan amidated threonine. Residues 343 to 372 (GEAANPFFTAAAATVMVSAGMLALKRKEEN) constitute a propeptide, removed by sortase.

It belongs to the M protein family.

Its subcellular location is the secreted. It localises to the cell wall. This protein is one of the different antigenic serotypes of protein M. Protein M is closely associated with virulence of the bacterium and can render the organism resistant to phagocytosis. The chain is M protein, serotype 2.2 (emmL2.2) from Streptococcus pyogenes.